The sequence spans 289 residues: Phosphoribulokinase (289 aa).

Position 12–20 (12–20 (GSSGAGTTT)) interacts with ATP.

The protein belongs to the phosphoribulokinase family.

It carries out the reaction D-ribulose 5-phosphate + ATP = D-ribulose 1,5-bisphosphate + ADP + H(+). The protein operates within carbohydrate biosynthesis; Calvin cycle. In Rhizobium meliloti (strain 1021) (Ensifer meliloti), this protein is Phosphoribulokinase (cbbP).